A 413-amino-acid polypeptide reads, in one-letter code: DnaJ protein homolog (413 aa).

In terms of domain architecture, J spans 10–75; that stretch reads NTKYYEILGV…REIYDQYGED (66 aa). Residues 133–217 form a CR-type zinc finger; that stretch reads GTSKKLSLSR…CKGEKVVQEK (85 aa). CXXCXGXG motif repeat units lie at residues 146-153, 162-169, 189-196, and 205-212; these read CSKCKGKG, CPGCQGSG, CNECKGTG, and CSQCKGEK. Positions 387–413 are disordered; sequence RRKQAQEAYDEDEDMHGGAQRVQCAQQ. C410 is subject to Cysteine methyl ester. C410 is lipidated: S-farnesyl cysteine. Residues 411 to 413 constitute a propeptide, removed in mature form; the sequence is AQQ.

As to expression, expressed in seedlings in all tissues, but exceedingly high levels in hypocotyledons and roots.

The protein localises to the cell membrane. In terms of biological role, plays a continuous role in plant development probably in the structural organization of compartments. This chain is DnaJ protein homolog (DNAJ1), found in Cucumis sativus (Cucumber).